A 331-amino-acid chain; its full sequence is Phenylalanine--tRNA ligase alpha subunit (331 aa).

Glu-252 provides a ligand contact to Mg(2+).

This sequence belongs to the class-II aminoacyl-tRNA synthetase family. Phe-tRNA synthetase alpha subunit type 1 subfamily. As to quaternary structure, tetramer of two alpha and two beta subunits. Mg(2+) is required as a cofactor.

Its subcellular location is the cytoplasm. It catalyses the reaction tRNA(Phe) + L-phenylalanine + ATP = L-phenylalanyl-tRNA(Phe) + AMP + diphosphate + H(+). The sequence is that of Phenylalanine--tRNA ligase alpha subunit from Xanthomonas euvesicatoria pv. vesicatoria (strain 85-10) (Xanthomonas campestris pv. vesicatoria).